The primary structure comprises 637 residues: Chaperone protein DnaK (637 aa).

Thr198 is subject to Phosphothreonine; by autocatalysis. A disordered region spans residues 597 to 637; that stretch reads MYAKTSQAGAGPQPGAGPGTGGQGPGKKDEDVVDADFEEVK. A compositionally biased stretch (gly residues) spans 608 to 621; it reads PQPGAGPGTGGQGP. The span at 627 to 637 shows a compositional bias: acidic residues; sequence DVVDADFEEVK.

This sequence belongs to the heat shock protein 70 family.

In terms of biological role, acts as a chaperone. This Syntrophus aciditrophicus (strain SB) protein is Chaperone protein DnaK.